Consider the following 107-residue polypeptide: MSLLRFAILCIIFVSLFGVHECFRGEKINVPAHPCYHTLCGSMIRNCYCCLGKKFDYCSPNQQNCLFRCEEVNRIPDFPKTNGVSKGLGPPIYLFFLGQFIYFVLGL.

Residues 1–22 (MSLLRFAILCIIFVSLFGVHEC) form the signal peptide. Disulfide bonds link cysteine 35–cysteine 49, cysteine 40–cysteine 69, cysteine 47–cysteine 65, and cysteine 50–cysteine 58. Residues 87 to 107 (GLGPPIYLFFLGQFIYFVLGL) traverse the membrane as a helical segment.

It belongs to the MEG family. In terms of tissue distribution, expressed in flowers.

Its subcellular location is the membrane. This is EMBRYO SURROUNDING FACTOR 1-like protein 5 (ESFL5) from Arabidopsis thaliana (Mouse-ear cress).